The primary structure comprises 421 residues: UDP-N-acetylglucosamine 1-carboxyvinyltransferase 2 (421 aa).

22 to 23 (KN) is a binding site for phosphoenolpyruvate. Arg-94 serves as a coordination point for UDP-N-acetyl-alpha-D-glucosamine. The active-site Proton donor is the Cys-118. Residue Cys-118 is modified to 2-(S-cysteinyl)pyruvic acid O-phosphothioketal. Residues Asp-308 and Ile-330 each coordinate UDP-N-acetyl-alpha-D-glucosamine.

The protein belongs to the EPSP synthase family. MurA subfamily.

Its subcellular location is the cytoplasm. It carries out the reaction phosphoenolpyruvate + UDP-N-acetyl-alpha-D-glucosamine = UDP-N-acetyl-3-O-(1-carboxyvinyl)-alpha-D-glucosamine + phosphate. It participates in cell wall biogenesis; peptidoglycan biosynthesis. In terms of biological role, cell wall formation. Adds enolpyruvyl to UDP-N-acetylglucosamine. This Lactococcus lactis subsp. lactis (strain IL1403) (Streptococcus lactis) protein is UDP-N-acetylglucosamine 1-carboxyvinyltransferase 2.